The primary structure comprises 300 residues: uncharacterized protein (300 aa).

Positions 1-20 (MRLLISCILILSILVNFISG) are cleaved as a signal peptide. Residues 21–279 (HAVLVAPTPF…PCSIYGDGNG (259 aa)) lie on the Extracellular side of the membrane. Residues N56, N217, and N278 are each glycosylated (N-linked (GlcNAc...) asparagine). A helical transmembrane segment spans residues 280–300 (SNLIIIPTLLIISILSLILMF).

It localises to the membrane. This is an uncharacterized protein from Dictyostelium discoideum (Social amoeba).